Here is a 347-residue protein sequence, read N- to C-terminus: Quinolinate synthase (347 aa).

The iminosuccinate site is built by His-47 and Ser-68. Position 113 (Cys-113) interacts with [4Fe-4S] cluster. Iminosuccinate contacts are provided by residues 139-141 and Ser-156; that span reads YAN. A [4Fe-4S] cluster-binding site is contributed by Cys-200. Iminosuccinate contacts are provided by residues 226–228 and Thr-243; that span reads HPE. Cys-297 contributes to the [4Fe-4S] cluster binding site.

The protein belongs to the quinolinate synthase family. Type 1 subfamily. The cofactor is [4Fe-4S] cluster.

It localises to the cytoplasm. It catalyses the reaction iminosuccinate + dihydroxyacetone phosphate = quinolinate + phosphate + 2 H2O + H(+). It participates in cofactor biosynthesis; NAD(+) biosynthesis; quinolinate from iminoaspartate: step 1/1. Its function is as follows. Catalyzes the condensation of iminoaspartate with dihydroxyacetone phosphate to form quinolinate. In Salmonella gallinarum (strain 287/91 / NCTC 13346), this protein is Quinolinate synthase.